Here is a 1322-residue protein sequence, read N- to C-terminus: Ice nucleation protein InaA (1322 aa).

Positions 162–1281 (ATYGSTLSGT…LTAGENSVLI (1120 aa)) are octapeptide periodicity. 4 stretches are compositionally biased toward polar residues: residues 271 to 302 (SLTAGYGSTQTAGEDSSLTAGYGSTQTAQKGS), 327 to 350 (TQTAGEESTQTAGYGSTQTAQKGS), 373 to 398 (GSTQTAGEDSSLTAGYGSTQTAQKGS), and 423 to 446 (TQTAGEESTQTAGYGSTQTAQKGS). 4 disordered regions span residues 271 to 303 (SLTAGYGSTQTAGEDSSLTAGYGSTQTAQKGSD), 327 to 358 (TQTAGEESTQTAGYGSTQTAQKGSDLTAGYGS), 372 to 399 (YGSTQTAGEDSSLTAGYGSTQTAQKGSD), and 423 to 448 (TQTAGEESTQTAGYGSTQTAQKGSDL).

Belongs to the bacterial ice nucleation protein family.

Its subcellular location is the cell outer membrane. Functionally, ice nucleation proteins enable bacteria to nucleate crystallization in supercooled water. The protein is Ice nucleation protein InaA (inaA) of Pantoea ananas (Erwinia uredovora).